A 107-amino-acid polypeptide reads, in one-letter code: Iron-sulfur cluster assembly protein CyaY (107 aa).

This sequence belongs to the frataxin family.

Involved in iron-sulfur (Fe-S) cluster assembly. May act as a regulator of Fe-S biogenesis. The chain is Iron-sulfur cluster assembly protein CyaY from Enterobacter sp. (strain 638).